We begin with the raw amino-acid sequence, 389 residues long: Succinate--CoA ligase [ADP-forming] subunit beta (389 aa).

An ATP-grasp domain is found at 9–236 (KELFASHGVP…KDAEDPLEAK (228 aa)). ATP-binding positions include Lys-45, 52-54 (GRG), Ser-94, and Glu-99. 2 residues coordinate Mg(2+): Asn-191 and Asp-205. Substrate contacts are provided by residues Asn-256 and 318-320 (GIT).

The protein belongs to the succinate/malate CoA ligase beta subunit family. As to quaternary structure, heterotetramer of two alpha and two beta subunits. Mg(2+) serves as cofactor.

The enzyme catalyses succinate + ATP + CoA = succinyl-CoA + ADP + phosphate. It catalyses the reaction GTP + succinate + CoA = succinyl-CoA + GDP + phosphate. Its pathway is carbohydrate metabolism; tricarboxylic acid cycle; succinate from succinyl-CoA (ligase route): step 1/1. Its function is as follows. Succinyl-CoA synthetase functions in the citric acid cycle (TCA), coupling the hydrolysis of succinyl-CoA to the synthesis of either ATP or GTP and thus represents the only step of substrate-level phosphorylation in the TCA. The beta subunit provides nucleotide specificity of the enzyme and binds the substrate succinate, while the binding sites for coenzyme A and phosphate are found in the alpha subunit. The protein is Succinate--CoA ligase [ADP-forming] subunit beta of Saccharopolyspora erythraea (strain ATCC 11635 / DSM 40517 / JCM 4748 / NBRC 13426 / NCIMB 8594 / NRRL 2338).